The sequence spans 620 residues: 1-deoxy-D-xylulose-5-phosphate synthase (620 aa).

Residues His-75 and 116–118 contribute to the thiamine diphosphate site; that span reads AHS. Position 147 (Asp-147) interacts with Mg(2+). Residues 148 to 149, Asn-177, Tyr-284, and Glu-366 each bind thiamine diphosphate; that span reads GA. Mg(2+) is bound at residue Asn-177.

This sequence belongs to the transketolase family. DXPS subfamily. In terms of assembly, homodimer. Mg(2+) serves as cofactor. Thiamine diphosphate is required as a cofactor.

It carries out the reaction D-glyceraldehyde 3-phosphate + pyruvate + H(+) = 1-deoxy-D-xylulose 5-phosphate + CO2. Its pathway is metabolic intermediate biosynthesis; 1-deoxy-D-xylulose 5-phosphate biosynthesis; 1-deoxy-D-xylulose 5-phosphate from D-glyceraldehyde 3-phosphate and pyruvate: step 1/1. Functionally, catalyzes the acyloin condensation reaction between C atoms 2 and 3 of pyruvate and glyceraldehyde 3-phosphate to yield 1-deoxy-D-xylulose-5-phosphate (DXP). This is 1-deoxy-D-xylulose-5-phosphate synthase from Bordetella bronchiseptica (strain ATCC BAA-588 / NCTC 13252 / RB50) (Alcaligenes bronchisepticus).